We begin with the raw amino-acid sequence, 217 residues long: Protein-L-isoaspartate O-methyltransferase (217 aa).

Ser-64 is a catalytic residue.

This sequence belongs to the methyltransferase superfamily. L-isoaspartyl/D-aspartyl protein methyltransferase family.

The protein resides in the cytoplasm. The enzyme catalyses [protein]-L-isoaspartate + S-adenosyl-L-methionine = [protein]-L-isoaspartate alpha-methyl ester + S-adenosyl-L-homocysteine. In terms of biological role, catalyzes the methyl esterification of L-isoaspartyl residues in peptides and proteins that result from spontaneous decomposition of normal L-aspartyl and L-asparaginyl residues. It plays a role in the repair and/or degradation of damaged proteins. In Rhodopseudomonas palustris (strain BisB5), this protein is Protein-L-isoaspartate O-methyltransferase.